The chain runs to 451 residues: D-inositol 3-phosphate glycosyltransferase (451 aa).

1D-myo-inositol 3-phosphate is bound at residue histidine 37. Residues 43–44 (QP) and glycine 51 each bind UDP-N-acetyl-alpha-D-glucosamine. Residues 48–53 (DAGGMN), lysine 106, tyrosine 138, threonine 162, and arginine 182 each bind 1D-myo-inositol 3-phosphate. Positions 259, 264, and 323 each coordinate UDP-N-acetyl-alpha-D-glucosamine. 3 residues coordinate Mg(2+): tyrosine 332, arginine 333, and alanine 335. UDP-N-acetyl-alpha-D-glucosamine is bound by residues glutamate 345 and glutamate 353. A Mg(2+)-binding site is contributed by threonine 359.

It belongs to the glycosyltransferase group 1 family. MshA subfamily. In terms of assembly, homodimer.

The enzyme catalyses 1D-myo-inositol 3-phosphate + UDP-N-acetyl-alpha-D-glucosamine = 1D-myo-inositol 2-acetamido-2-deoxy-alpha-D-glucopyranoside 3-phosphate + UDP + H(+). Catalyzes the transfer of a N-acetyl-glucosamine moiety to 1D-myo-inositol 3-phosphate to produce 1D-myo-inositol 2-acetamido-2-deoxy-glucopyranoside 3-phosphate in the mycothiol biosynthesis pathway. The sequence is that of D-inositol 3-phosphate glycosyltransferase from Corynebacterium kroppenstedtii (strain DSM 44385 / JCM 11950 / CIP 105744 / CCUG 35717).